The following is a 538-amino-acid chain: CTP synthase (538 aa).

Residues 1 to 269 (MSPRKYVIVT…ARLVERRLFG (269 aa)) are amidoligase domain. Position 15 (Ser-15) interacts with CTP. Residue Ser-15 coordinates UTP. 16–21 (SVGKGL) contacts ATP. Tyr-56 is a binding site for L-glutamine. An ATP-binding site is contributed by Asp-73. Positions 73 and 143 each coordinate Mg(2+). CTP contacts are provided by residues 150-152 (DIE), 190-195 (KTKPVQ), and Lys-226. Residues 190–195 (KTKPVQ) and Lys-226 each bind UTP. Positions 294–538 (KVAMVGKYTK…FVTAVARLRG (245 aa)) constitute a Glutamine amidotransferase type-1 domain. Gly-358 contributes to the L-glutamine binding site. The active-site Nucleophile; for glutamine hydrolysis is Cys-385. L-glutamine is bound by residues 386-389 (FGMQ), Glu-409, and Arg-466. Catalysis depends on residues His-512 and Glu-514.

Belongs to the CTP synthase family. As to quaternary structure, homotetramer.

It carries out the reaction UTP + L-glutamine + ATP + H2O = CTP + L-glutamate + ADP + phosphate + 2 H(+). It catalyses the reaction L-glutamine + H2O = L-glutamate + NH4(+). The catalysed reaction is UTP + NH4(+) + ATP = CTP + ADP + phosphate + 2 H(+). It participates in pyrimidine metabolism; CTP biosynthesis via de novo pathway; CTP from UDP: step 2/2. Allosterically activated by GTP, when glutamine is the substrate; GTP has no effect on the reaction when ammonia is the substrate. The allosteric effector GTP functions by stabilizing the protein conformation that binds the tetrahedral intermediate(s) formed during glutamine hydrolysis. Inhibited by the product CTP, via allosteric rather than competitive inhibition. Its function is as follows. Catalyzes the ATP-dependent amination of UTP to CTP with either L-glutamine or ammonia as the source of nitrogen. Regulates intracellular CTP levels through interactions with the four ribonucleotide triphosphates. This is CTP synthase from Aeropyrum pernix (strain ATCC 700893 / DSM 11879 / JCM 9820 / NBRC 100138 / K1).